Here is a 557-residue protein sequence, read N- to C-terminus: Predicted GPI-anchored protein 17 (557 aa).

The signal sequence occupies residues 1-19 (MKFSTVFTAIFALGTAVSA). 4 N-linked (GlcNAc...) asparagine glycosylation sites follow: Asn-62, Asn-116, Asn-284, and Asn-309. Positions 320 to 355 (LRKREYNDAVEAALRDIQKREEGIDDVEIALRKMKR) form a coiled coil. 3 N-linked (GlcNAc...) asparagine glycosylation sites follow: Asn-376, Asn-471, and Asn-520. Asn-533 carries GPI-anchor amidated asparagine lipidation. Positions 534–557 (AGSSYGPGFYSTIFAVFGLFAMMI) are cleaved as a propeptide — removed in mature form.

Substrate for cleavage by KEX2 in vitro.

Its subcellular location is the cell membrane. Its function is as follows. Predicted GPI-anchored protein which may have a role during host infection. This is Predicted GPI-anchored protein 17 (PGA17) from Candida albicans (strain SC5314 / ATCC MYA-2876) (Yeast).